Reading from the N-terminus, the 607-residue chain is Autophagy-related protein 16-1 (607 aa).

The interval 13–43 (WKRHIAEELRRRDRLQRQAFEEIILQYTKLL) is interaction with ATG5. Residues 79 to 230 (DSQLQEMAQL…QKELAEAAKE (152 aa)) adopt a coiled-coil conformation. Position 139 is a phosphoserine (Ser-139). Residues 207–230 (AENEKDSRRRQARLQKELAEAAKE) are WIPI2-binding. The tract at residues 230-242 (EPLPVEQDDDIEV) is RB1CC1-binding. Residues Ser-269 and Ser-287 each carry the phosphoserine modification. Residues 296-299 (DIMD) carry the Caspase cleavage motif. WD repeat units lie at residues 320-359 (AHDG…CEFK), 364-403 (GSNA…LRHT), 406-445 (GHSG…CIKT), 447-484 (FAGS…VVRE), 486-525 (ELLG…VKQT), 532-573 (KCGS…KVLS), and 575-607 (QHSS…WAQP).

Belongs to the WD repeat ATG16 family. Homodimer. Homooligomer. Heterooligomer with ATG16L2. Interacts with WIPI1. Interacts with WIPI2. Interacts with RB1CC1; the interaction is required for ULK1 complex-dependent autophagy. Interacts with ATG5. Part of the minor complex composed of 4 sets of ATG12-ATG5 and ATG16L1 (400 kDa); this complex interacts with ATG3 leading to disruption of ATG7 interaction and promotion of ATG8-like proteins lipidation. Part of the major complex composed of 8 sets of ATG12-ATG5 and ATG16L1 (800 kDa). Interacts with RAB33B (GTP- and GDP-bound forms); the complex consists of a tetramer where two RAB33B molecules bind independently one molecule of the ATG16L1 homodimer; the interaction promotes ATG12-ATG5-ATG16L1 complex recruitment to phagophores. Interacts (via WD repeats) with TMEM59; the interaction mediates unconventional autophagic activity of TMEM59. Interacts with TLR2. Interacts (via WD repeats) with MEFV. Interacts (via N-terminal) with CLTC. Interacts with NOD1. Interacts with NOD2. Interacts with TUFM. Interacts with TRIM16. Interacts (via WD repeats) with SPATA33. Interacts with Irgm1. In terms of processing, proteolytic cleavage by activated CASP3 leads to degradation and may regulate autophagy upon cellular stress and apoptotic stimuli. Post-translationally, phosphorylation at Ser-139 promotes association with the ATG12-ATG5 conjugate to form the ATG12-ATG5-ATG16L1 complex. As to expression, widely expressed. Expressed in the testis and sperm midpiece (at protein level). Expressed in liver. In terms of tissue distribution, highly expressed in liver. As to expression, expressed in brain.

It localises to the cytoplasm. The protein localises to the preautophagosomal structure membrane. The protein resides in the endosome membrane. Its subcellular location is the lysosome membrane. Its function is as follows. Plays an essential role in both canonical and non-canonical autophagy: interacts with ATG12-ATG5 to mediate the lipidation to ATG8 family proteins (MAP1LC3A, MAP1LC3B, MAP1LC3C, GABARAPL1, GABARAPL2 and GABARAP). Acts as a molecular hub, coordinating autophagy pathways via distinct domains that support either canonical or non-canonical signaling. During canonical autophagy, interacts with ATG12-ATG5 to mediate the conjugation of phosphatidylethanolamine (PE) to ATG8 proteins, to produce a membrane-bound activated form of ATG8. Thereby, controls the elongation of the nascent autophagosomal membrane. As part of the ATG8 conjugation system with ATG5 and ATG12, required for recruitment of LRRK2 to stressed lysosomes and induction of LRRK2 kinase activity in response to lysosomal stress. Also involved in non-canonical autophagy, a parallel pathway involving conjugation of ATG8 proteins to single membranes at endolysosomal compartments, probably by catalyzing conjugation of phosphatidylserine (PS) to ATG8. Non-canonical autophagy plays a key role in epithelial cells to limit lethal infection by influenza A (IAV) virus. Regulates mitochondrial antiviral signaling (MAVS)-dependent type I interferon (IFN-I) production. Negatively regulates NOD1- and NOD2-driven inflammatory cytokine response. Instead, promotes an autophagy-dependent antibacterial pathway together with NOD1 or NOD2. Plays a role in regulating morphology and function of Paneth cell. This is Autophagy-related protein 16-1 from Mus musculus (Mouse).